Here is a 460-residue protein sequence, read N- to C-terminus: Argininosuccinate lyase (460 aa).

The protein belongs to the lyase 1 family. Argininosuccinate lyase subfamily.

Its subcellular location is the cytoplasm. It carries out the reaction 2-(N(omega)-L-arginino)succinate = fumarate + L-arginine. Its pathway is amino-acid biosynthesis; L-arginine biosynthesis; L-arginine from L-ornithine and carbamoyl phosphate: step 3/3. This chain is Argininosuccinate lyase, found in Sulfurimonas denitrificans (strain ATCC 33889 / DSM 1251) (Thiomicrospira denitrificans (strain ATCC 33889 / DSM 1251)).